The primary structure comprises 375 residues: uncharacterized protein (375 aa).

Residues 54 to 78 form a disordered region; that stretch reads EGIPPPTQSQEPLKPQENISRPIHH.

This is an uncharacterized protein from Bos taurus (Bovine).